Here is a 666-residue protein sequence, read N- to C-terminus: Protein translocase subunit SecA 2 (666 aa).

ATP is bound by residues Gln-119, 137 to 141 (GEGKS), and Asp-546.

It belongs to the SecA family. As to quaternary structure, monomer and homodimer. Part of the essential Sec protein translocation apparatus which comprises SecA, SecYEG and auxiliary proteins SecDF-YajC and YidC.

It localises to the cell inner membrane. The protein resides in the cytoplasm. The enzyme catalyses ATP + H2O + cellular proteinSide 1 = ADP + phosphate + cellular proteinSide 2.. Functionally, part of the Sec protein translocase complex. Interacts with the SecYEG preprotein conducting channel. Has a central role in coupling the hydrolysis of ATP to the transfer of proteins into and across the cell membrane, serving both as a receptor for the preprotein-SecB complex and as an ATP-driven molecular motor driving the stepwise translocation of polypeptide chains across the membrane. This Nitrosospira multiformis (strain ATCC 25196 / NCIMB 11849 / C 71) protein is Protein translocase subunit SecA 2.